We begin with the raw amino-acid sequence, 594 residues long: Actin-histidine N-methyltransferase (594 aa).

Positions 1–22 are disordered; it reads MGKKSRVKTQKSGTGATATVSP. A compositionally biased stretch (polar residues) spans 10-20; it reads QKSGTGATATV. S-adenosyl-L-methionine is bound by residues Arg-75, 104-106, Arg-254, 275-279, and 325-327; these read EGF, DMCNH, and SGF. In terms of domain architecture, SET spans 94–314; sequence EGFEMVNFKE…AGDQIYIFYG (221 aa). The segment at 551–594 is disordered; that stretch reads GLVNGENLIPNGTRSENESLSPEESENVTGEESSGSMAKVKERL.

Belongs to the class V-like SAM-binding methyltransferase superfamily. SETD3 actin-histidine methyltransferase family. Interacts with MYOD1. In terms of processing, phosphorylated by GSK3B, which is required for recognition by the SCF(FBXW7) complex and subsequent degradation. Post-translationally, ubiquitinated by the SCF(FBXW7) complex following phosphorylation by GSK3B, leading to its degradation by the proteasome. In terms of tissue distribution, prominently expressed in the heart and skeletal muscles and is also detected weakly in the stomach, small intestine, and colon.

It localises to the cytoplasm. The protein resides in the nucleus. The enzyme catalyses L-histidyl-[protein] + S-adenosyl-L-methionine = N(tele)-methyl-L-histidyl-[protein] + S-adenosyl-L-homocysteine + H(+). Its function is as follows. Protein-histidine N-methyltransferase that specifically mediates 3-methylhistidine (tele-methylhistidine) methylation of actin at 'His-73'. Histidine methylation of actin is required for smooth muscle contraction of the laboring uterus during delivery. Does not have protein-lysine N-methyltransferase activity and probably only catalyzes histidine methylation of actin. The protein is Actin-histidine N-methyltransferase of Mus musculus (Mouse).